The sequence spans 555 residues: Urocanate hydratase (555 aa).

Residues 51–52, Gln-129, 175–177, Glu-195, Arg-200, 241–242, 262–266, 272–273, and Tyr-321 each bind NAD(+); these read GG, GMG, NA, QTSAH, and YL. Cys-409 is an active-site residue. Gly-491 provides a ligand contact to NAD(+).

This sequence belongs to the urocanase family. NAD(+) is required as a cofactor.

It localises to the cytoplasm. The catalysed reaction is 4-imidazolone-5-propanoate = trans-urocanate + H2O. It participates in amino-acid degradation; L-histidine degradation into L-glutamate; N-formimidoyl-L-glutamate from L-histidine: step 2/3. In terms of biological role, catalyzes the conversion of urocanate to 4-imidazolone-5-propionate. The protein is Urocanate hydratase of Rhizorhabdus wittichii (strain DSM 6014 / CCUG 31198 / JCM 15750 / NBRC 105917 / EY 4224 / RW1) (Sphingomonas wittichii).